A 1261-amino-acid chain; its full sequence is Rho GTPase-activating protein 29 (1261 aa).

Residues Ser-171, Ser-176, Ser-179, and Ser-190 each carry the phosphoserine modification. In terms of domain architecture, F-BAR spans 192 to 462; the sequence is LELDNVLLKN…SAKLYDPGQE (271 aa). Residues 296-418 adopt a coiled-coil conformation; it reads RKNEMEKQRK…EILAQLRTLV (123 aa). The disordered stretch occupies residues 481–501; the sequence is NVNKHLNSSQPSGFGPANSLE. A phosphoserine mark is found at Ser-499, Ser-519, and Ser-552. The span at 541–559 shows a compositional bias: low complexity; the sequence is SESTGGSSESRSLDSESIS. Residues 541-600 form a disordered region; that stretch reads SESTGGSSESRSLDSESISPGDFHRKLPRTPSSGTMSSADDLDEREPPSPSETGPNSLGT. The segment at 612–657 adopts a Phorbol-ester/DAG-type zinc-finger fold; that stretch reads THKFRKLRSPTKCRDCEGIVVFQGVECEECLLVCHRKCLENLVIIC. Residues 671-886 form the Rho-GAP domain; the sequence is AEFTQVAKKE…FLITYSQKIF (216 aa). 2 positions are modified to phosphoserine: Ser-913 and Ser-949. Positions 981–1011 are disordered; the sequence is SASQKIEDGKTPKPLSLKSDRSTNNVERHTP. Basic and acidic residues predominate over residues 998–1010; sequence KSDRSTNNVERHT. Phosphoserine occurs at positions 1019, 1144, and 1146. Disordered regions lie at residues 1117–1153 and 1178–1238; these read HSIN…APVR and GNEE…VNPM. Over residues 1133-1144 the composition is skewed to basic and acidic residues; that stretch reads RSVREASERRSS. Residues 1258-1261 are interaction with PTPN13/PTPL1; that stretch reads PQFV.

In terms of assembly, interacts with PTPN13/PTPL1. Interacts with RAP2A via its coiled coil domain. Interacts with RASIP1. As to expression, widely expressed. Highly expressed in skeletal muscle and heart. Expressed at intermediate level in placenta, liver and pancreas. Weakly expressed in brain, lung and kidney.

In terms of biological role, GTPase activator for the Rho-type GTPases by converting them to an inactive GDP-bound state. Has strong activity toward RHOA, and weaker activity toward RAC1 and CDC42. May act as a specific effector of RAP2A to regulate Rho. In concert with RASIP1, suppresses RhoA signaling and dampens ROCK and MYH9 activities in endothelial cells and plays an essential role in blood vessel tubulogenesis. The polypeptide is Rho GTPase-activating protein 29 (ARHGAP29) (Homo sapiens (Human)).